The primary structure comprises 60 residues: MAQLKITLVRSAAHRLPKQRKIVKELGLGRINSSVVKPDDAATRGQIFHIAHLVDVEIIK.

Belongs to the universal ribosomal protein uL30 family. As to quaternary structure, part of the 50S ribosomal subunit.

The chain is Large ribosomal subunit protein uL30 from Lactiplantibacillus plantarum (strain ATCC BAA-793 / NCIMB 8826 / WCFS1) (Lactobacillus plantarum).